The primary structure comprises 392 residues: Cellobiose 2-epimerase (392 aa).

The protein belongs to the cellobiose 2-epimerase family.

It catalyses the reaction D-cellobiose = beta-D-glucosyl-(1-&gt;4)-D-mannopyranose. In terms of biological role, catalyzes the reversible epimerization of cellobiose to 4-O-beta-D-glucopyranosyl-D-mannose (Glc-Man). Can also epimerize cellotriose to Glc-Glc-Man, cellotetraose to Glc-Glc-Glc-Man, lactose to epilactose, and mannobiose to 4-O-beta-D-mannopyranosyl-D-glucopyranose (Man-Glc). May function as a mannobiose 2-epimerase in vivo and be involved in a mannan catabolic pathway which feeds into glycolysis. The polypeptide is Cellobiose 2-epimerase (bfce) (Bacteroides fragilis (strain ATCC 25285 / DSM 2151 / CCUG 4856 / JCM 11019 / LMG 10263 / NCTC 9343 / Onslow / VPI 2553 / EN-2)).